A 251-amino-acid chain; its full sequence is Tachykinins (251 aa).

An N-terminal signal peptide occupies residues 1–21; sequence MGAPRTCLIFITIQLVSLAYA. Positions 22–25 are excised as a propeptide; sequence QEVS. Arg-36 carries the arginine amide modification. A propeptide spanning residues 39–50 is cleaved from the precursor; that stretch reads KYFDEEGIEQFY. Lys-61 carries the lysine amide modification. The propeptide occupies 65 to 163; it reads SLQDILEAPE…MEPEQSNDLD (99 aa). An Arginine amide modification is found at Arg-176. Residues 180–183 constitute a propeptide that is removed on maturation; the sequence is SINN. Arginine amide is present on Arg-199. The propeptide occupies 203-223; sequence DLKNSNAHEIKFLVDQNGPLP. Arg-235 is modified (arginine amide). The propeptide occupies 239–251; sequence WTDEPSLEMDMPN.

This sequence belongs to the tachykinin family. As to expression, tachykinin-related peptide 1: Expressed in antennal lobe (AL) and gnathal ganglion (GNG) (at protein level). Expression in AL detected in all animals, in GNG in most animals (at protein level). Not expressed in corpora cardiaca (CC) and corpora allata (CA) (at protein level). Tachykinin-related peptide 2: Expressed in antennal lobe (AL) corpora cardiaca (CC) and corpora allata (CA) with expression detected in few animals (at protein level). Not expressed in gnathal ganglion (GNG) (at protein level). Tachykinin-related peptide 4: Expressed in corpora cardiaca (CC), corpora allata (CA), antennal lobe (AL) and gnathal ganglion (GNG) (at protein level). Expression in AL and GNG detected in most animals, in CC and CA detected in few animals (at protein level). Tachykinin-related peptide 5: Expressed in corpora cardiaca (CC), corpora allata (CA), antennal lobe (AL) and gnathal ganglion (GNG) (at protein level). Expression in CC and CA detected in some animals, in AL and GNG in few animals (at protein level). Tachykinin-related peptide 6: Expressed in antennal lobe (AL) and gnathal ganglion (GNG) (at protein level). Expression in AL detected in all animals, in GNG in some animals (at protein level). Not expressed in corpora cardiaca (CC) and corpora allata (CA) (at protein level).

The protein resides in the secreted. Its function is as follows. Tachykinins are active peptides which excite neurons, evoke behavioral responses, are potent vasodilators and secretagogues, and contract (directly or indirectly) many smooth muscles. This Agrotis ipsilon (Black cutworm moth) protein is Tachykinins.